The primary structure comprises 253 residues: Protein PET20, mitochondrial (253 aa).

Residues 1–36 (MLKLARPFIPPLSRNNAISSGIVLTSRRFQSSFTFL) constitute a mitochondrion transit peptide. A disordered region spans residues 44-93 (KNQMKSKRKKGSKKAAYHRQPPEHEHTAPLIKQNKTITKKEHSDVRGSHL). Basic residues predominate over residues 47–60 (MKSKRKKGSKKAAY). Basic and acidic residues predominate over residues 81–90 (TKKEHSDVRG).

The protein localises to the mitochondrion. Required for respiratory growth, stability of the mitochondrial genome and for proper assembly or maintenance of mitochondrial proteins. The polypeptide is Protein PET20, mitochondrial (PET20) (Saccharomyces cerevisiae (strain ATCC 204508 / S288c) (Baker's yeast)).